The chain runs to 295 residues: Delta-1-pyrroline-5-carboxylate reductase apf3 (295 aa).

This sequence belongs to the pyrroline-5-carboxylate reductase family.

It functions in the pathway secondary metabolite biosynthesis. Delta-1-pyrroline-5-carboxylate reductase; part of the gene cluster that mediates the biosynthesis of the cyclic tetrapeptide apicidin F (APF). The non-ribosomal peptide synthetase apf1 incorporates four different amino acids to produce apicidin F: L-phenylalanine, D-pipecolic acid (D-pip), N-methoxy-L-tryptophan and L-2-aminooctanedioic acid. L-Phenylalanine is the only proteinogenic amino acid directly used by apf1. The 3 other apf1 substrates are non-proteinogenic and have to be modified by other enzymes of the cluster. Lysine is converted to delta-1-pyrroline-5-carboxylate (P5C) which is reduced to L-pipecolic acid (L-pip) by apf3. L-pip is epimerized to D-pip, probably by apf1 activity, prior to incorporation. L-Tryptophan is N-oxidyzed by one of the cytochrome P450 monooxygenases (apf7 or apf8), and further methylated at the hydroxy group by the O-methyltransferase apf6 to yield N-methoxy-L-tryptophan. The synthesis of the fourth apf1 substrate is more complex. The fatty acid synthase apf5 is involved in the synthesis of the octanoic acid backbone of L-2-aminooctanedioic acid by fixing one acetyl-CoA unit and three malonyl-CoA units. Then one of the cytochrome P450 monooxygenases (apf7 or apf8) may oxidize this backbone to 2-oxooctanoic acid. The aminotransferase apf4 is predicted to catalyze the exchange of the keto group with an amino group. The next step would be the oxidation of 2-aminooctanoic acid by one of the cytochrome P450 monooxygenases (apf7 or apf8). The last step is the oxidation of 2-amino-8-hydroxyoctanoic acid to 2-aminooctanedioic acid is catalyzed by the FAD-dependent monooxygenase apf9. This chain is Delta-1-pyrroline-5-carboxylate reductase apf3, found in Gibberella fujikuroi (strain CBS 195.34 / IMI 58289 / NRRL A-6831) (Bakanae and foot rot disease fungus).